We begin with the raw amino-acid sequence, 353 residues long: Endophilin-A3 (353 aa).

The membrane-binding amphipathic helix stretch occupies residues 1-21; that stretch reads MSVAGLKKQFHKASQLFSEKI. Positions 18-249 constitute a BAR domain; sequence SEKISGAEGT…LQNRINVASS (232 aa). Positions 60–87 are required for dimerization upon membrane association; sequence PNPAYRAKLGMLNTMSKIRGQVKTTGYP. Positions 180–201 form a coiled coil; sequence DEEVKQAVEKFEESKELAERSM. Positions 218–254 are interaction with ARC; that stretch reads FVEAALDYHKQSTEILEDLQSKLQNRINVASSRPKRE. Residues 291–350 enclose the SH3 domain; that stretch reads VDQPCCQALYDFEPENEGELGFKEGDIITLTNQIDENWYEGMLNGESGFFPHNYVEVMVP.

The protein belongs to the endophilin family. As to quaternary structure, interacts with ARC. Interacts with SYNJ1 and DNM1. Highest level in a region associated with endocytosis of yolk proteins in developing oocytes (at protein level). Highest level in small ovarian follicles. High levels in brain and testis. Lower level in adrenal glands.

It is found in the cytoplasm. The protein resides in the early endosome membrane. Implicated in endocytosis. May recruit other proteins to membranes with high curvature. Implicated in endocytosis of yolk proteins during oogenesis. The polypeptide is Endophilin-A3 (Gallus gallus (Chicken)).